A 378-amino-acid polypeptide reads, in one-letter code: Queuine tRNA-ribosyltransferase (378 aa).

Asp92 serves as the catalytic Proton acceptor. Substrate-binding positions include 92–96 (DSGGF), Asp146, Gln188, and Gly215. The RNA binding stretch occupies residues 246–252 (GVGTHLE). Asp265 functions as the Nucleophile in the catalytic mechanism. Residues 270-274 (TRLAR) are RNA binding; important for wobble base 34 recognition. Residues Cys303, Cys305, Cys308, and His334 each coordinate Zn(2+).

The protein belongs to the queuine tRNA-ribosyltransferase family. In terms of assembly, homodimer. Within each dimer, one monomer is responsible for RNA recognition and catalysis, while the other monomer binds to the replacement base PreQ1. Zn(2+) serves as cofactor.

It catalyses the reaction 7-aminomethyl-7-carbaguanine + guanosine(34) in tRNA = 7-aminomethyl-7-carbaguanosine(34) in tRNA + guanine. Its pathway is tRNA modification; tRNA-queuosine biosynthesis. Functionally, catalyzes the base-exchange of a guanine (G) residue with the queuine precursor 7-aminomethyl-7-deazaguanine (PreQ1) at position 34 (anticodon wobble position) in tRNAs with GU(N) anticodons (tRNA-Asp, -Asn, -His and -Tyr). Catalysis occurs through a double-displacement mechanism. The nucleophile active site attacks the C1' of nucleotide 34 to detach the guanine base from the RNA, forming a covalent enzyme-RNA intermediate. The proton acceptor active site deprotonates the incoming PreQ1, allowing a nucleophilic attack on the C1' of the ribose to form the product. After dissociation, two additional enzymatic reactions on the tRNA convert PreQ1 to queuine (Q), resulting in the hypermodified nucleoside queuosine (7-(((4,5-cis-dihydroxy-2-cyclopenten-1-yl)amino)methyl)-7-deazaguanosine). This Thermosynechococcus vestitus (strain NIES-2133 / IAM M-273 / BP-1) protein is Queuine tRNA-ribosyltransferase.